The following is a 385-amino-acid chain: Outer membrane porin protein BP0840 (385 aa).

Residues 1–20 form the signal peptide; that stretch reads MKKTLLAAALLAGFAGAAQA.

To bacterial outer membrane proteins and porins. Homotrimer.

It localises to the cell outer membrane. Functionally, forms anion selective channels. The sequence is that of Outer membrane porin protein BP0840 from Bordetella pertussis (strain Tohama I / ATCC BAA-589 / NCTC 13251).